Reading from the N-terminus, the 371-residue chain is MGYAKSAMLIFLLALVIASCATAMDMSVVSSNDNHHVTAGPGRRQGIFDAEATLMFESWMVKHGKVYDSVAEKERRLTIFEDNLRFITNRNAENLSYRLGLNRFADLSLHEYGEICHGADPRPPRNHVFMTSSNRYKTSDGDVLPKSVDWRNEGAVTEVKDQGLCRSCWAFSTVGAVEGLNKIVTGELVTLSEQDLINCNKENNGCGGGKVETAYEFIMNNGGLGTDNDYPYKALNGVCEGRLKEDNKNVMIDGYENLPANDEAALMKAVAHQPVTAVVDSSSREFQLYESGVFDGTCGTNLNHGVVVVGYGTENGRDYWIVKNSRGDTWGEAGYMKMARNIANPRGLCGIAMRASYPLKNSFSTDKVSVA.

Residues 1–23 (MGYAKSAMLIFLLALVIASCATA) form the signal peptide. Residues 24-143 (MDMSVVSSND…NRYKTSDGDV (120 aa)) constitute a propeptide, activation peptide. A glycan (N-linked (GlcNAc...) asparagine) is linked at asparagine 94. 3 disulfide bridges follow: cysteine 165/cysteine 206, cysteine 199/cysteine 239, and cysteine 298/cysteine 349. The active site involves cysteine 168. Catalysis depends on residues histidine 304 and asparagine 324.

This sequence belongs to the peptidase C1 family. In terms of tissue distribution, expressed in roots, inflorescences and siliques.

Its function is as follows. Possesses protease activity in vitro. The sequence is that of Probable cysteine protease RDL5 from Arabidopsis thaliana (Mouse-ear cress).